Here is a 447-residue protein sequence, read N- to C-terminus: Argininosuccinate synthase (447 aa).

Residues 17–25 (AFSGGLDTS) and Ala-43 contribute to the ATP site. Tyr-99 contacts L-citrulline. Residues Gly-129 and Thr-131 each coordinate ATP. Positions 131, 135, and 136 each coordinate L-aspartate. Asn-135 serves as a coordination point for L-citrulline. Residue Asp-136 coordinates ATP. Positions 139 and 192 each coordinate L-citrulline. Asp-194 contacts ATP. L-citrulline contacts are provided by Thr-201, Glu-203, and Glu-280.

Belongs to the argininosuccinate synthase family. Type 2 subfamily. As to quaternary structure, homotetramer.

The protein localises to the cytoplasm. The catalysed reaction is L-citrulline + L-aspartate + ATP = 2-(N(omega)-L-arginino)succinate + AMP + diphosphate + H(+). Its pathway is amino-acid biosynthesis; L-arginine biosynthesis; L-arginine from L-ornithine and carbamoyl phosphate: step 2/3. This is Argininosuccinate synthase from Escherichia coli O1:K1 / APEC.